A 213-amino-acid polypeptide reads, in one-letter code: uncharacterized protein (213 aa).

Residues Gly-53, Glu-74, and Asp-96 each coordinate S-adenosyl-L-methionine.

It belongs to the methyltransferase superfamily. YrrT family.

Could be a S-adenosyl-L-methionine-dependent methyltransferase. This is an uncharacterized protein from Bacillus pumilus (strain SAFR-032).